The chain runs to 182 residues: Fatty-acid and retinol-binding protein 2 (182 aa).

Positions 1–17 (MIRAFLVVALASVAVFS) are cleaved as a signal peptide. Coiled-coil stretches lie at residues 46 to 73 (LKAITAEEKAALKELAQNHKEYKTEEEF) and 131 to 152 (TLDSLKELAKGYIAEYKALSDD).

It belongs to the fatty-acid and retinol-binding protein (FARBP) family.

The protein localises to the secreted. In terms of biological role, probably binds lipids. The protein is Fatty-acid and retinol-binding protein 2 (far-2) of Caenorhabditis elegans.